Reading from the N-terminus, the 336-residue chain is DNA repair protein RAD51 homolog A (336 aa).

The HhH domain occupies 45 to 74; it reads TVEAVAYAPKKELLNIKGISEAKAEKILAE. ATP is bound at residue 124-131; it reads GEFRTGKT. Residues 242–257 carry the Nuclear export signal motif; sequence LARFLRMLLRLADEFG.

The protein belongs to the RecA family. RAD51 subfamily. In terms of assembly, forms linear homooligomers, giving rise to a RAD51 nucleoprotein filament, which is essential for strand-pairing reactions during DNA recombination.

The protein resides in the nucleus. It localises to the cytoplasm. The protein localises to the chromosome. Its function is as follows. Plays an important role in homologous strand exchange, a key step in DNA repair through homologous recombination (HR). Binds to single-stranded DNA in an ATP-dependent manner to form nucleoprotein filaments which are essential for the homology search and strand exchange. Catalyzes the recognition of homology and strand exchange between homologous DNA partners to form a joint molecule between a processed DNA break and the repair template. Recruited to resolve stalled replication forks during replication stress. Also involved in interstrand cross-link repair. The polypeptide is DNA repair protein RAD51 homolog A (rad51-a) (Xenopus laevis (African clawed frog)).